Reading from the N-terminus, the 413-residue chain is CinA-like protein (413 aa).

Belongs to the CinA family.

The polypeptide is CinA-like protein (Geobacter metallireducens (strain ATCC 53774 / DSM 7210 / GS-15)).